Reading from the N-terminus, the 335-residue chain is Histidinol-phosphate aminotransferase (335 aa).

The residue at position 202 (Lys-202) is an N6-(pyridoxal phosphate)lysine.

The protein belongs to the class-II pyridoxal-phosphate-dependent aminotransferase family. Histidinol-phosphate aminotransferase subfamily. In terms of assembly, homodimer. Requires pyridoxal 5'-phosphate as cofactor.

The catalysed reaction is L-histidinol phosphate + 2-oxoglutarate = 3-(imidazol-4-yl)-2-oxopropyl phosphate + L-glutamate. The protein operates within amino-acid biosynthesis; L-histidine biosynthesis; L-histidine from 5-phospho-alpha-D-ribose 1-diphosphate: step 7/9. The chain is Histidinol-phosphate aminotransferase from Thermotoga sp. (strain RQ2).